The chain runs to 407 residues: Odorant receptor 67a (407 aa).

Residues Met1–Arg40 lie on the Cytoplasmic side of the membrane. A helical transmembrane segment spans residues Thr41–Ala61. Topologically, residues Glu62 to Ser79 are extracellular. The chain crosses the membrane as a helical span at residues Cys80–Met100. Over Lys101–Phe144 the chain is Cytoplasmic. The chain crosses the membrane as a helical span at residues Gly145–Ile165. Over Gln166–Thr208 the chain is Extracellular. Residues Ala209–Met229 traverse the membrane as a helical segment. The Cytoplasmic segment spans residues His230–Glu278. A helical transmembrane segment spans residues Val279 to Val300. The Extracellular portion of the chain corresponds to Gln301–Gln314. Residues Met315–Phe331 traverse the membrane as a helical segment. At Ser332–Thr378 the chain is on the cytoplasmic side. Residues Val379 to Ala401 traverse the membrane as a helical segment. The Extracellular portion of the chain corresponds to Val402–Gln407.

Belongs to the insect chemoreceptor superfamily. Heteromeric odorant receptor channel (TC 1.A.69) family. Or49a subfamily. In terms of assembly, interacts with Orco. Complexes exist early in the endomembrane system in olfactory sensory neurons (OSNs), coupling these complexes to the conserved ciliary trafficking pathway. As to expression, expressed in olfactory sensory neurons in the antenna.

It is found in the cell membrane. Functionally, odorant receptor which mediates acceptance or avoidance behavior, depending on its substrates. The odorant receptor repertoire encodes a large collection of odor stimuli that vary widely in identity, intensity, and duration. Forms a complex with Orco to form odorant-sensing units, providing sensitive and prolonged odorant signaling and calcium permeability. Involved in the behavioral responses to benzaldehyde and acetophenone. The polypeptide is Odorant receptor 67a (Or67a) (Drosophila melanogaster (Fruit fly)).